Here is a 280-residue protein sequence, read N- to C-terminus: MAIRKYKPTTPGRRASSVSMFTEITRSTPEKSLLRPLSKTGGRNSHGHITTRHRGGGHKRRYRVIDFRRNDKDGVLAKVAHIEYDPNRTANIALLHYFDGEKRYILAPKGLTQGTVIESGAAADIKVGNNLPLRNIPTGTTIHNVELKPGAGAKLARSAGASIQLLGKEGSYAVLRMPSSEIRRVDIRCRATVGEVGNAEQINIRWGKAGRMRWKGWRPTVRGVVMNPVDHPHGGGEGKTSGGRHPVSPWGQKEGRTRKPKRYSDDMIVRRRRANKNKKR.

Disordered stretches follow at residues 29-58 (PEKS…GGGH) and 225-280 (VMNP…NKKR). Residues 45-58 (SHGHITTRHRGGGH) show a composition bias toward basic residues. A compositionally biased stretch (basic and acidic residues) spans 253-269 (KEGRTRKPKRYSDDMIV). Residues 270-280 (RRRRANKNKKR) are compositionally biased toward basic residues.

It belongs to the universal ribosomal protein uL2 family. In terms of assembly, part of the 50S ribosomal subunit. Forms a bridge to the 30S subunit in the 70S ribosome.

Functionally, one of the primary rRNA binding proteins. Required for association of the 30S and 50S subunits to form the 70S ribosome, for tRNA binding and peptide bond formation. It has been suggested to have peptidyltransferase activity; this is somewhat controversial. Makes several contacts with the 16S rRNA in the 70S ribosome. In Corynebacterium glutamicum (strain R), this protein is Large ribosomal subunit protein uL2.